A 238-amino-acid polypeptide reads, in one-letter code: Adenylate dimethylallyltransferase (238 aa).

This sequence belongs to the isopentenyl transferase family.

It catalyses the reaction dimethylallyl diphosphate + AMP = N(6)-(dimethylallyl)adenosine 5'-phosphate + diphosphate. Functionally, transfers dimethylallyl groups to AMP as part of the biosynthesis of cytokinin phytohormones. The sequence is that of Adenylate dimethylallyltransferase (tzs) from Ralstonia solanacearum (Pseudomonas solanacearum).